The chain runs to 153 residues: Deoxyuridine 5'-triphosphate nucleotidohydrolase (153 aa).

Residues 71–73 (RSG), N84, 88–90 (TID), and K98 each bind substrate.

The protein belongs to the dUTPase family. The cofactor is Mg(2+).

The catalysed reaction is dUTP + H2O = dUMP + diphosphate + H(+). It participates in pyrimidine metabolism; dUMP biosynthesis; dUMP from dCTP (dUTP route): step 2/2. Functionally, this enzyme is involved in nucleotide metabolism: it produces dUMP, the immediate precursor of thymidine nucleotides and it decreases the intracellular concentration of dUTP so that uracil cannot be incorporated into DNA. The polypeptide is Deoxyuridine 5'-triphosphate nucleotidohydrolase (Wolbachia pipientis wMel).